A 246-amino-acid polypeptide reads, in one-letter code: tRNA (guanine-N(1)-)-methyltransferase (246 aa).

Gly-114 is a binding site for S-adenosyl-L-methionine.

The protein belongs to the RNA methyltransferase TrmD family. Homodimer.

The protein localises to the cytoplasm. It catalyses the reaction guanosine(37) in tRNA + S-adenosyl-L-methionine = N(1)-methylguanosine(37) in tRNA + S-adenosyl-L-homocysteine + H(+). Its function is as follows. Specifically methylates guanosine-37 in various tRNAs. This Novosphingobium aromaticivorans (strain ATCC 700278 / DSM 12444 / CCUG 56034 / CIP 105152 / NBRC 16084 / F199) protein is tRNA (guanine-N(1)-)-methyltransferase.